The following is a 200-amino-acid chain: MIINQSEFSVSAVKASQYPEGGLDEIALAGRSNVGKSSFINTLLQRKNLARTSSSPGKTQTLNFYRVDSDQADFYLVDVPGYGYAKVSKKQREEFGEMIQDYLETRAYLKGLILMIDGRHEPTVDDIAMYDYAQYLNLPILLVATKMDKIKKNAFNKTEAAFRKHLNLNKDNVTFLPFSSVTKLNVDQVKDWIQARLYEE.

Positions 22–199 (GLDEIALAGR…KDWIQARLYE (178 aa)) constitute an EngB-type G domain. Residues 30–37 (GRSNVGKS), 57–61 (GKTQT), 78–81 (DVPG), 145–148 (TKMD), and 178–180 (FSS) each bind GTP. Mg(2+) contacts are provided by S37 and T59.

The protein belongs to the TRAFAC class TrmE-Era-EngA-EngB-Septin-like GTPase superfamily. EngB GTPase family. Mg(2+) is required as a cofactor.

In terms of biological role, necessary for normal cell division and for the maintenance of normal septation. The sequence is that of Probable GTP-binding protein EngB from Lactobacillus delbrueckii subsp. bulgaricus (strain ATCC 11842 / DSM 20081 / BCRC 10696 / JCM 1002 / NBRC 13953 / NCIMB 11778 / NCTC 12712 / WDCM 00102 / Lb 14).